Here is an 807-residue protein sequence, read N- to C-terminus: Glycerol-3-phosphate acyltransferase (807 aa).

The HXXXXD motif signature appears at 305-310 (CHRSHM).

Belongs to the GPAT/DAPAT family.

Its subcellular location is the cell inner membrane. The enzyme catalyses sn-glycerol 3-phosphate + an acyl-CoA = a 1-acyl-sn-glycero-3-phosphate + CoA. The protein operates within phospholipid metabolism; CDP-diacylglycerol biosynthesis; CDP-diacylglycerol from sn-glycerol 3-phosphate: step 1/3. In Shigella boydii serotype 18 (strain CDC 3083-94 / BS512), this protein is Glycerol-3-phosphate acyltransferase.